We begin with the raw amino-acid sequence, 211 residues long: Thiamine-phosphate synthase (211 aa).

Residues Gln41–Lys45 and Asn73 contribute to the 4-amino-2-methyl-5-(diphosphooxymethyl)pyrimidine site. Mg(2+) is bound by residues Asp74 and Asp93. Thr112 lines the 4-amino-2-methyl-5-(diphosphooxymethyl)pyrimidine pocket. Ser139–Thr141 lines the 2-[(2R,5Z)-2-carboxy-4-methylthiazol-5(2H)-ylidene]ethyl phosphate pocket. Lys142 is a 4-amino-2-methyl-5-(diphosphooxymethyl)pyrimidine binding site. 2-[(2R,5Z)-2-carboxy-4-methylthiazol-5(2H)-ylidene]ethyl phosphate is bound by residues Gly169 and Val189 to Ser190.

Belongs to the thiamine-phosphate synthase family. The cofactor is Mg(2+).

It catalyses the reaction 2-[(2R,5Z)-2-carboxy-4-methylthiazol-5(2H)-ylidene]ethyl phosphate + 4-amino-2-methyl-5-(diphosphooxymethyl)pyrimidine + 2 H(+) = thiamine phosphate + CO2 + diphosphate. It carries out the reaction 2-(2-carboxy-4-methylthiazol-5-yl)ethyl phosphate + 4-amino-2-methyl-5-(diphosphooxymethyl)pyrimidine + 2 H(+) = thiamine phosphate + CO2 + diphosphate. The catalysed reaction is 4-methyl-5-(2-phosphooxyethyl)-thiazole + 4-amino-2-methyl-5-(diphosphooxymethyl)pyrimidine + H(+) = thiamine phosphate + diphosphate. Its pathway is cofactor biosynthesis; thiamine diphosphate biosynthesis; thiamine phosphate from 4-amino-2-methyl-5-diphosphomethylpyrimidine and 4-methyl-5-(2-phosphoethyl)-thiazole: step 1/1. In terms of biological role, condenses 4-methyl-5-(beta-hydroxyethyl)thiazole monophosphate (THZ-P) and 2-methyl-4-amino-5-hydroxymethyl pyrimidine pyrophosphate (HMP-PP) to form thiamine monophosphate (TMP). The polypeptide is Thiamine-phosphate synthase (Thioalkalivibrio sulfidiphilus (strain HL-EbGR7)).